An 833-amino-acid polypeptide reads, in one-letter code: Bifunctional dethiobiotin synthetase/7,8-diamino-pelargonic acid aminotransferase, mitochondrial (833 aa).

The transit peptide at 1–23 (MIPVTATLIRHRLRHLRHRIRFK) directs the protein to the mitochondrion. The dethiobiotin synthetase stretch occupies residues 36–299 (HPTYLIWSAN…VLVLPPVPKD (264 aa)). 47-52 (SLGKTL) contacts ATP. Threonine 51 contributes to the Mg(2+) binding site. Threonine 81 contributes to the substrate binding site. Aspartate 88 serves as a coordination point for Mg(2+). ATP contacts are provided by residues aspartate 97, 210–213 (ETAG), and 270–271 (ED). Glutamate 210 lines the Mg(2+) pocket. The interval 332–830 (RLNGMAKLAG…TKLYKRLGEF (499 aa)) is 7,8-diamino-pelargonic acid aminotransferase. 391–392 (WW) provides a ligand contact to (8S)-8-amino-7-oxononanoate. Position 453-454 (453-454 (GS)) interacts with pyridoxal 5'-phosphate. (8S)-8-amino-7-oxononanoate is bound at residue tyrosine 495. ATP contacts are provided by residues 518–520 (PWY) and glutamate 545. Residue aspartate 637 participates in pyridoxal 5'-phosphate binding. 2 residues coordinate (8S)-8-amino-7-oxononanoate: lysine 666 and glycine 700. Lysine 666 carries the post-translational modification N6-(pyridoxal phosphate)lysine. Position 701–702 (701–702 (HS)) interacts with pyridoxal 5'-phosphate. Arginine 797 contributes to the (8S)-8-amino-7-oxononanoate binding site.

In the N-terminal section; belongs to the dethiobiotin synthetase family. It in the C-terminal section; belongs to the class-III pyridoxal-phosphate-dependent aminotransferase family. BioA subfamily. As to quaternary structure, homodimer. The cofactor is Mg(2+). It depends on pyridoxal 5'-phosphate as a cofactor.

It localises to the mitochondrion matrix. It catalyses the reaction (7R,8S)-7,8-diammoniononanoate + CO2 + ATP = (4R,5S)-dethiobiotin + ADP + phosphate + 3 H(+). The catalysed reaction is (8S)-8-amino-7-oxononanoate + S-adenosyl-L-methionine = S-adenosyl-4-methylsulfanyl-2-oxobutanoate + (7R,8S)-7,8-diammoniononanoate. It functions in the pathway cofactor biosynthesis; biotin biosynthesis; biotin from 7,8-diaminononanoate: step 1/2. Its pathway is cofactor biosynthesis; biotin biosynthesis; 7,8-diaminononanoate from 8-amino-7-oxononanoate (SAM route): step 1/1. In terms of biological role, bifunctional enzyme that catalyzes two different reactions involved in the biotin biosynthesis. Its function is as follows. Catalyzes a mechanistically unusual reaction, the ATP-dependent insertion of CO2 between the N7 and N8 nitrogen atoms of 7,8-diaminopelargonic acid (DAPA) to form an ureido ring. Catalyzes the transfer of the alpha-amino group from S-adenosyl-L-methionine (SAM) to 7-keto-8-aminopelargonic acid (KAPA) to form 7,8-diaminopelargonic acid (DAPA). It is the only aminotransferase known to utilize SAM as an amino donor. This chain is Bifunctional dethiobiotin synthetase/7,8-diamino-pelargonic acid aminotransferase, mitochondrial, found in Arabidopsis thaliana (Mouse-ear cress).